The chain runs to 360 residues: Isopentenyl-diphosphate delta-isomerase (360 aa).

Residue 12–13 participates in substrate binding; the sequence is RK. FMN-binding positions include 69-71, Ser-99, and Asn-130; that span reads SMT. 99-101 lines the substrate pocket; sequence SQR. Gln-164 serves as a coordination point for substrate. A Mg(2+)-binding site is contributed by Glu-165. Residues Lys-196, Thr-226, 277–279, and 298–299 each bind FMN; these read GVR and AK.

It belongs to the IPP isomerase type 2 family. As to quaternary structure, homooctamer. Dimer of tetramers. FMN serves as cofactor. Requires NADPH as cofactor. Mg(2+) is required as a cofactor.

It is found in the cytoplasm. The enzyme catalyses isopentenyl diphosphate = dimethylallyl diphosphate. Functionally, involved in the biosynthesis of isoprenoids. Catalyzes the 1,3-allylic rearrangement of the homoallylic substrate isopentenyl (IPP) to its allylic isomer, dimethylallyl diphosphate (DMAPP). This Halobacterium salinarum (strain ATCC 700922 / JCM 11081 / NRC-1) (Halobacterium halobium) protein is Isopentenyl-diphosphate delta-isomerase.